The primary structure comprises 422 residues: Succinate--CoA ligase [ADP-forming] subunit beta, mitochondrial (422 aa).

A mitochondrion-targeting transit peptide spans Met1–Arg27. In terms of domain architecture, ATP-grasp spans Ala36 to Ala279. ATP is bound by residues Lys75, Gly82 to Gly84, and Glu142. 2 residues coordinate Mg(2+): Asn234 and Asp248. Substrate is bound by residues Asn299 and Gly356–Met358.

The protein belongs to the succinate/malate CoA ligase beta subunit family. In terms of assembly, heterodimer of an alpha and a beta subunit. The cofactor is Mg(2+).

Its subcellular location is the mitochondrion. It catalyses the reaction succinate + ATP + CoA = succinyl-CoA + ADP + phosphate. It participates in carbohydrate metabolism; tricarboxylic acid cycle; succinate from succinyl-CoA (ligase route): step 1/1. Functionally, succinyl-CoA synthetase functions in the citric acid cycle (TCA), coupling the hydrolysis of succinyl-CoA to the synthesis of ATP and thus represents the only step of substrate-level phosphorylation in the TCA. The beta subunit provides nucleotide specificity of the enzyme and binds the substrate succinate, while the binding sites for coenzyme A and phosphate are found in the alpha subunit. This Oryza sativa subsp. japonica (Rice) protein is Succinate--CoA ligase [ADP-forming] subunit beta, mitochondrial.